A 373-amino-acid chain; its full sequence is Galactoside alpha-(1,2)-fucosyltransferase 1 (373 aa).

Over methionine 1–alanine 12 the chain is Cytoplasmic. Residues phenylalanine 13–histidine 29 traverse the membrane as a helical; Signal-anchor for type II membrane protein segment. Over glutamine 30–glycine 373 the chain is Lumenal. Asparagine 66, asparagine 301, and asparagine 327 each carry an N-linked (GlcNAc...) asparagine glycan.

It belongs to the glycosyltransferase 11 family. In terms of tissue distribution, brain.

It localises to the golgi apparatus. It is found in the golgi stack membrane. It catalyses the reaction a beta-D-galactosyl-(1-&gt;4)-N-acetyl-beta-D-glucosaminyl derivative + GDP-beta-L-fucose = an alpha-L-Fuc-(1-&gt;2)-beta-D-Gal-(1-&gt;4)-beta-D-GlcNAc derivative + GDP + H(+). The enzyme catalyses a ganglioside GA1 + GDP-beta-L-fucose = a ganglioside Fuc-GA1 + GDP + H(+). The catalysed reaction is a beta-D-Gal-(1-&gt;3)-beta-D-GlcNAc-(1-&gt;3)-beta-D-Gal-(1-&gt;4)-beta-D-Glc-(1&lt;-&gt;1')-Cer(d18:1(4E)) + GDP-beta-L-fucose = alpha-L-fucosyl-(1-&gt;2)- beta-D-galactosyl-(1-&gt;3)-N-acetyl-beta-D-glucosaminyl-(1-&gt;3)-beta-D-galactosyl-(1-&gt;4)-beta-D-glucosyl-(1&lt;-&gt;1')-N-acylsphing-4-enine + GDP + H(+). It carries out the reaction a neolactoside nLc4Cer(d18:1(4E)) + GDP-beta-L-fucose = a neolactoside IV(2)-alpha-Fuc-nLc4Cer(d18:1(4E)) + GDP + H(+). It catalyses the reaction a ganglioside GM1 + GDP-beta-L-fucose = a ganglioside Fuc-GM1 + GDP + H(+). The enzyme catalyses beta-D-galactosyl-(1-&gt;3)-N-acetyl-D-galactosamine + GDP-beta-L-fucose = alpha-L-fucosyl-(1-&gt;2)-beta-D-galactosyl-(1-&gt;3)-N-acetyl-D-galactosamine + GDP + H(+). Its pathway is protein modification; protein glycosylation. In terms of biological role, catalyzes the transfer of L-fucose, from a guanosine diphosphate-beta-L-fucose, to the terminal galactose residue of glycoconjugates through an alpha(1,2) linkage leading to H antigen synthesis that is an intermediate substrate in the synthesis of ABO blood group antigens. H antigen is essential for maturation of the glomerular layer of the main olfactory bulb, in cell migration and early cell-cell contacts during tumor associated angiogenesis. Preferentially fucosylates soluble lactose and to a lesser extent fucosylates glycolipids gangliosides GA1 and GM1a. The sequence is that of Galactoside alpha-(1,2)-fucosyltransferase 1 from Oryctolagus cuniculus (Rabbit).